The following is a 622-amino-acid chain: Auxin response factor 11 (622 aa).

Positions 145–247 form a DNA-binding region, TF-B3; the sequence is FVKILTASDT…DLRVGVRRLA (103 aa). 2 disordered regions span residues 358 to 398 and 483 to 513; these read SIQR…ISEI and SNISDSTTKCQDPNSSNSPKEQKQQTSTRSR. Polar residues-rich tracts occupy residues 376–387 and 483–511; these read SALTPTPTQQQS and SNISDSTTKCQDPNSSNSPKEQKQQTSTR. The 84-residue stretch at 511–594 folds into the PB1 domain; that stretch reads RSRIKVQMQG…KKLFIYPSDE (84 aa).

Belongs to the ARF family. Homodimers and heterodimers.

Its subcellular location is the nucleus. Its function is as follows. Auxin response factors (ARFs) are transcriptional factors that bind specifically to the DNA sequence 5'-TGTCTC-3' found in the auxin-responsive promoter elements (AuxREs). Could act as transcriptional activator or repressor. Formation of heterodimers with Aux/IAA proteins may alter their ability to modulate early auxin response genes expression. The chain is Auxin response factor 11 (ARF11) from Arabidopsis thaliana (Mouse-ear cress).